The chain runs to 2842 residues: Adenomatous polyposis coli protein (2842 aa).

At Ala-2 the chain carries N-acetylalanine. A coiled-coil region spans residues 2-62 (AAASYDQLLK…GSIEDETMTS (61 aa)). Phosphoserine is present on residues Ser-105 and Ser-109. Residues 125–260 (SRESTGYLEE…ASHEAERQLE (136 aa)) are a coiled coil. A disordered region spans residues 238 to 304 (AEAERSSQSK…THSAPRRLTS (67 aa)). Positions 239–259 (EAERSSQSKHETASHEAERQL) are enriched in basic and acidic residues. Over residues 268–279 (NLATSGSGQSSA) the composition is skewed to polar residues. ARM repeat units follow at residues 451–493 (LMKL…HYSV), 503–545 (LTNL…IASV), 546–589 (LRNL…VLSA), 590–636 (LWNL…GGGI), 637–681 (LRNV…ACGT), 682–723 (LWNL…SAAA), and 724–765 (LRNL…LDAQ). Ser-742, Ser-746, and Ser-778 each carry phosphoserine. Residues 828-877 (VLPSSSSSRGSLDSSRSEKDRSLERERGIGLSTYHSATENPGTSSKRGLQ) form a disordered region. The span at 831 to 841 (SSSSSRGSLDS) shows a compositional bias: low complexity. The span at 842–855 (SRSEKDRSLERERG) shows a compositional bias: basic and acidic residues. A compositionally biased stretch (polar residues) spans 860 to 877 (TYHSATENPGTSSKRGLQ). Ser-906 is modified (phosphoserine). Disordered regions lie at residues 921–942 (RRSS…ESSN) and 956–988 (RSSN…SEDD). The span at 931 to 942 (NTHNFAKSESSN) shows a compositional bias: polar residues. Low complexity predominate over residues 959–969 (NDSLNSVTSSD). Phosphoserine occurs at positions 985, 1036, and 1040. The tract at residues 1018 to 1167 (ELDTPINYSL…TNYSIKYNEE (150 aa)) is interaction with catenins. Disordered stretches follow at residues 1058–1078 (IKQN…VYSE), 1092–1166 (GQQE…KYNE), 1188–1249 (SQKP…CKVP), and 1306–1373 (ENDV…PEHY). Composition is skewed to polar residues over residues 1066-1078 (SRSQ…VYSE) and 1103-1128 (RGTN…QSLC). Positions 1144–1157 (RYSEEEQHEEEERP) are enriched in basic and acidic residues. 2 stretches are compositionally biased toward low complexity: residues 1188 to 1200 (SQKP…KTPS) and 1209 to 1223 (NSPS…SSNA). 2 stretches are compositionally biased toward polar residues: residues 1224 to 1242 (KRQS…QTPK) and 1323 to 1340 (VSQS…SGLA). Positions 1352–1363 (SSGAKSPSKSGA) are enriched in low complexity. Residues Ser-1357, Ser-1368, Ser-1382, Ser-1389, and Ser-1392 each carry the phosphoserine modification. Disordered regions lie at residues 1398–1474 (IASS…VSAA), 1525–1568 (PPVQ…SDDD), 1584–1609 (KSSR…KPSQ), and 1661–1711 (ESPP…IPDL). Thr-1435 is modified (phosphothreonine). A compositionally biased stretch (pro residues) spans 1435 to 1444 (TPPPPPPPQP). Residues 1532–1546 (NGNETEPEQPEESNE) are compositionally biased toward acidic residues. The span at 1547-1562 (NQDKEVEKPDSEKDLL) shows a compositional bias: basic and acidic residues. Ser-1565 carries the phosphoserine modification. The span at 1681 to 1700 (EFEKRDTIPTEGRSTDEAQR) shows a compositional bias: basic and acidic residues. Phosphoserine is present on Ser-1714. Over residues 1748–1762 (VQQASMTSSGTNKNQ) the composition is skewed to polar residues. Disordered stretches follow at residues 1748 to 1950 (VQQA…EKLQ), 1963 to 2010 (RNSS…APKS), and 2043 to 2067 (SSAM…PRKV). Phosphoserine is present on Ser-1772. Basic and acidic residues-rich tracts occupy residues 1783–1792 (YRTRVRKNTD) and 1804–1833 (SDNK…DRVR). A phosphoserine mark is found at Ser-1859, Ser-1861, and Ser-1862. Residues 1864 to 1891 (DFDDDDVDLSREKAELRKGKESKDSEAK) form a highly charged region. Residues 1871-1894 (DLSREKAELRKGKESKDSEAKVTC) are compositionally biased toward basic and acidic residues. Residues 1899 to 1911 (SSSQQSARKAQAS) are compositionally biased toward low complexity. The segment covering 1927 to 1936 (EQPTFPQSSK) has biased composition (polar residues). The span at 1937–1949 (DVPDRGAATDEKL) shows a compositional bias: basic and acidic residues. Phosphoserine is present on residues Ser-1969 and Ser-1971. The interval 2034–2058 (EDDLLRECISSAMPKKRRPSRLKGE) is interaction with AXIN1. Residues Ser-2087, Ser-2092, Ser-2125, Ser-2129, Ser-2130, and Ser-2132 each carry the phosphoserine modification. 3 disordered regions span residues 2148 to 2173 (FHLT…PGEK), 2234 to 2641 (PGVR…AESK), and 2664 to 2842 (CPIN…VTSV). The residue at position 2151 (Thr-2151) is a Phosphothreonine. The interval 2167 to 2674 (ILKPGEKSTL…PINNPRSGRS (508 aa)) is basic region. Composition is skewed to polar residues over residues 2257 to 2272 (ASKS…TSPR) and 2283 to 2347 (SPIT…QLPR). Phosphoserine occurs at positions 2260, 2270, and 2283. Positions 2348 to 2369 (TSSPSTASTKSSGSGKMSYTSP) are enriched in low complexity. Composition is skewed to polar residues over residues 2370-2411 (GRQL…NGSN) and 2418-2427 (RMSSTKSSGS). Residues 2459-2477 (SASFESLSPSSRPDSPTRS) are compositionally biased toward low complexity. Phosphoserine occurs at positions 2473 and 2535. The interaction with DLG1 stretch occupies residues 2475-2842 (TRSQAQTPVL…HSGSYLVTSV (368 aa)). The segment covering 2518–2535 (SDGRPSKRHDIARSHSES) has biased composition (basic and acidic residues). Positions 2555–2568 (SSSLPRVSTWRRTG) are enriched in polar residues. Position 2569 is a phosphoserine (Ser-2569). The segment covering 2569–2579 (SSSSILSASSE) has biased composition (low complexity). Residues 2580–2592 (SSEKAKSEDEKHV) show a composition bias toward basic and acidic residues. The segment covering 2629 to 2638 (TTSSGAASGA) has biased composition (low complexity). 2 stretches are compositionally biased toward polar residues: residues 2668 to 2679 (NPRSGRSPTGNT) and 2702 to 2713 (GKQSVGSGSPVQ). 2 positions are modified to phosphoserine: Ser-2671 and Ser-2674. Residues 2674 to 2842 (SPTGNTPPVI…HSGSYLVTSV (169 aa)) are interaction with MAPRE1. Phosphothreonine is present on Thr-2679. Residues Ser-2710 and Ser-2723 each carry the phosphoserine modification. Over residues 2762–2773 (SSSSSSKHSSPS) the composition is skewed to low complexity. Residues 2783–2809 (FNYNPSPRKSSADSTSARPSQIPTPVG) show a composition bias toward polar residues. Position 2788 is a phosphoserine (Ser-2788). Residues 2802–2805 (SQIP) carry the Microtubule tip localization signal motif. The short motif at 2840–2842 (TSV) is the PDZ-binding element.

This sequence belongs to the adenomatous polyposis coli (APC) family. As to quaternary structure, forms homooligomers. Found in a complex consisting of ARHGEF4, APC and CTNNB1. Found in a complex composed of MACF1, APC, AXIN1, CTNNB1 and GSK3B. The complex composed, at least, of APC, CTNNB1 and GSK3B interacts with JPT1; the interaction requires the inactive form of GSK3B (phosphorylated at 'Ser-9'). Interacts with APC2. Interacts with DLG1 (via PDZ domains) and DLG3 (via PDZ domains). Interacts with alpha- and beta-catenins. Interacts with AXIN1 (via RGS domain). Interacts with ARHGEF4 (via N-terminus). Interacts (via C-terminal residues 2674-2843) with MAPRE1 (via C-terminal residues 206-211); the interaction inhibits association with and bundling of F-actin. Interacts with MAPRE2 and MAPRE3 (via C-terminus). Interacts with DIAPH1; DIAPH1 acts as a scaffold protein for MAPRE1 and APC to stabilize microtubules and promote cell migration. Interacts with DIAPH2. Interacts with SCRIB; may mediate APC targeting to adherens junctions of epithelial cells. Interacts with SPATA13 (via N-terminus and SH3 domain). Interacts with ASAP1 (via SH3 domain). Interacts (at the cell membrane) with AMER1 and AMER2 (via ARM repeats). Interacts with KHDRBS1. Interacts with actin; binds both to F-actin and actin filament bundles. Post-translationally, phosphorylated; phosphorylation enhances the F-actin bundling activity. Phosphorylated by GSK3B. Ubiquitinated, leading to its degradation by the proteasome. Ubiquitination is facilitated by Axin. Deubiquitinated by ZRANB1/TRABID.

Its subcellular location is the cell junction. It is found in the adherens junction. It localises to the cytoplasm. The protein resides in the cytoskeleton. The protein localises to the cell projection. Its subcellular location is the lamellipodium. It is found in the ruffle membrane. It localises to the cell membrane. In terms of biological role, tumor suppressor. Promotes rapid degradation of CTNNB1 and participates in Wnt signaling as a negative regulator. APC activity is correlated with its phosphorylation state. Activates the GEF activity of SPATA13 and ARHGEF4. Plays a role in hepatocyte growth factor (HGF)-induced cell migration. Required for MMP9 up-regulation via the JNK signaling pathway in colorectal tumor cells. Associates with both microtubules and actin filaments, components of the cytoskeleton. Plays a role in mediating the organization of F-actin into ordered bundles. Functions downstream of Rho GTPases and DIAPH1 to selectively stabilize microtubules. Acts as a mediator of ERBB2-dependent stabilization of microtubules at the cell cortex. It is required for the localization of MACF1 to the cell membrane and this localization of MACF1 is critical for its function in microtubule stabilization. The polypeptide is Adenomatous polyposis coli protein (Apc) (Rattus norvegicus (Rat)).